Consider the following 181-residue polypeptide: Ribosome-recycling factor (181 aa).

A disordered region spans residues 131-154; it reads RRDAMDSVKKEKEMPEDDVRKAEN.

The protein belongs to the RRF family.

It is found in the cytoplasm. In terms of biological role, responsible for the release of ribosomes from messenger RNA at the termination of protein biosynthesis. May increase the efficiency of translation by recycling ribosomes from one round of translation to another. The chain is Ribosome-recycling factor from Leuconostoc citreum (strain KM20).